The primary structure comprises 431 residues: Acetylornithine aminotransferase (431 aa).

Residues 118–119 (GA) and Phe157 contribute to the pyridoxal 5'-phosphate site. Arg160 contacts N(2)-acetyl-L-ornithine. Residue 251–254 (DEVQ) participates in pyridoxal 5'-phosphate binding. Lys284 bears the N6-(pyridoxal phosphate)lysine mark. Position 313 (Ser313) interacts with N(2)-acetyl-L-ornithine. Thr314 provides a ligand contact to pyridoxal 5'-phosphate.

This sequence belongs to the class-III pyridoxal-phosphate-dependent aminotransferase family. ArgD subfamily. In terms of assembly, homodimer. Pyridoxal 5'-phosphate serves as cofactor.

The protein localises to the cytoplasm. The catalysed reaction is N(2)-acetyl-L-ornithine + 2-oxoglutarate = N-acetyl-L-glutamate 5-semialdehyde + L-glutamate. It participates in amino-acid biosynthesis; L-arginine biosynthesis; N(2)-acetyl-L-ornithine from L-glutamate: step 4/4. This chain is Acetylornithine aminotransferase, found in Bifidobacterium longum (strain NCC 2705).